The chain runs to 153 residues: MKKKVNIRILDKRFGKEFFLPKYFTDGSSGMDLRACIDKEINLNPNETVLISTGVSIDISDQKISGLILPRSGLSHKYGIILSNTIGLIDSDYQGPIMISMLNRSNKNFLISIGDRIAQIIFVPLIQIEWNIVNKFVKITNRKDMGFGHSGKN.

Substrate is bound by residues 71 to 73 (RSG), asparagine 84, 88 to 90 (LID), and methionine 98.

This sequence belongs to the dUTPase family. Requires Mg(2+) as cofactor.

It catalyses the reaction dUTP + H2O = dUMP + diphosphate + H(+). Its pathway is pyrimidine metabolism; dUMP biosynthesis; dUMP from dCTP (dUTP route): step 2/2. Its function is as follows. This enzyme is involved in nucleotide metabolism: it produces dUMP, the immediate precursor of thymidine nucleotides and it decreases the intracellular concentration of dUTP so that uracil cannot be incorporated into DNA. In Wigglesworthia glossinidia brevipalpis, this protein is Deoxyuridine 5'-triphosphate nucleotidohydrolase.